The primary structure comprises 376 residues: MSKRDYYEVLGVGRDASEREIKKAYKRLAMKYHPDRNPGDKEAEASFKEVKEAYEILTDTDKKAAYDQFGHAGVDPNRGGGGFGGGGDFGDIFGDVFGDIFGGGRRGGQRQAARGSDLRYNLELSLEEAVRGLTKELKVPTLVGCDSCDGSGAKKGSSATTCGTCHGMGQVQMRQGFFAVQQTCPTCHGRGKIIKDPCSKCHGNGRVEKTKTLSVKIPAGVDTGDRIRLAGEGEAGEFGAPPGDLYVQVTVREHPIFVRDGNNLYCEVPISFAKAALGGEIEVPTLDGKVSLKIPAETQTGRMFRLRGKGVKSVRSHAVGDLLCKVVMETPVNLSERQKELLREFEASLTGESKKHSPKAEGFFDGVKKFFQDLNN.

Residues 5 to 70 (DYYEVLGVGR…DKKAAYDQFG (66 aa)) enclose the J domain. The CR-type zinc-finger motif lies at 132-210 (GLTKELKVPT…CHGNGRVEKT (79 aa)). Zn(2+) is bound by residues Cys145, Cys148, Cys162, Cys165, Cys184, Cys187, Cys198, and Cys201. CXXCXGXG motif repeat units lie at residues 145–152 (CDSCDGSG), 162–169 (CGTCHGMG), 184–191 (CPTCHGRG), and 198–205 (CSKCHGNG).

This sequence belongs to the DnaJ family. Homodimer. Zn(2+) is required as a cofactor.

The protein resides in the cytoplasm. Participates actively in the response to hyperosmotic and heat shock by preventing the aggregation of stress-denatured proteins and by disaggregating proteins, also in an autonomous, DnaK-independent fashion. Unfolded proteins bind initially to DnaJ; upon interaction with the DnaJ-bound protein, DnaK hydrolyzes its bound ATP, resulting in the formation of a stable complex. GrpE releases ADP from DnaK; ATP binding to DnaK triggers the release of the substrate protein, thus completing the reaction cycle. Several rounds of ATP-dependent interactions between DnaJ, DnaK and GrpE are required for fully efficient folding. Also involved, together with DnaK and GrpE, in the DNA replication of plasmids through activation of initiation proteins. The sequence is that of Chaperone protein DnaJ from Shewanella amazonensis (strain ATCC BAA-1098 / SB2B).